The chain runs to 472 residues: Chromosomal replication initiator protein DnaA (472 aa).

Residues 1–73 form a domain I, interacts with DnaA modulators region; the sequence is MSNMEHDRWS…LTCWQAELPE (73 aa). The domain II stretch occupies residues 73–128; it reads EVCRIDLTVRSPMRAAVAKEAAAPVEHRRAEHRPATETRSHATVPASSNHDALGGS. The segment at 92-127 is disordered; it reads EAAAPVEHRRAEHRPATETRSHATVPASSNHDALGG. Over residues 97–112 the composition is skewed to basic and acidic residues; that stretch reads VEHRRAEHRPATETRS. Positions 129–351 are domain III, AAA+ region; it reads PLDPRLTFAS…GAINRLLAHS (223 aa). Residues glycine 176, glycine 178, lysine 179, and threonine 180 each coordinate ATP. The interval 352-472 is domain IV, binds dsDNA; that stretch reads KLNAQPVTLE…VDSLKRQLQE (121 aa).

Belongs to the DnaA family. Oligomerizes as a right-handed, spiral filament on DNA at oriC.

It is found in the cytoplasm. Functionally, plays an essential role in the initiation and regulation of chromosomal replication. ATP-DnaA binds to the origin of replication (oriC) to initiate formation of the DNA replication initiation complex once per cell cycle. Binds the DnaA box (a 9 base pair repeat at the origin) and separates the double-stranded (ds)DNA. Forms a right-handed helical filament on oriC DNA; dsDNA binds to the exterior of the filament while single-stranded (ss)DNA is stabiized in the filament's interior. The ATP-DnaA-oriC complex binds and stabilizes one strand of the AT-rich DNA unwinding element (DUE), permitting loading of DNA polymerase. After initiation quickly degrades to an ADP-DnaA complex that is not apt for DNA replication. Binds acidic phospholipids. In Rhodopseudomonas palustris (strain HaA2), this protein is Chromosomal replication initiator protein DnaA.